The primary structure comprises 251 residues: Hydroxyacylglutathione hydrolase (251 aa).

Zn(2+) contacts are provided by His-53, His-55, Asp-57, His-58, His-110, Asp-127, and His-165.

The protein belongs to the metallo-beta-lactamase superfamily. Glyoxalase II family. In terms of assembly, monomer. Zn(2+) is required as a cofactor.

It catalyses the reaction an S-(2-hydroxyacyl)glutathione + H2O = a 2-hydroxy carboxylate + glutathione + H(+). Its pathway is secondary metabolite metabolism; methylglyoxal degradation; (R)-lactate from methylglyoxal: step 2/2. In terms of biological role, thiolesterase that catalyzes the hydrolysis of S-D-lactoyl-glutathione to form glutathione and D-lactic acid. The chain is Hydroxyacylglutathione hydrolase from Shigella boydii serotype 4 (strain Sb227).